The following is a 469-amino-acid chain: Glutamate--tRNA ligase 1 (469 aa).

Positions 8–18 match the 'HIGH' region motif; sequence PSPTGYLHIGG. The tract at residues 117-137 is disordered; it reads TPRYDGTWRPEPGKELPPVPA. The 'KMSKS' region motif lies at 240–244; it reads KLSKR. Lys-243 provides a ligand contact to ATP.

The protein belongs to the class-I aminoacyl-tRNA synthetase family. Glutamate--tRNA ligase type 1 subfamily. As to quaternary structure, monomer.

The protein localises to the cytoplasm. The enzyme catalyses tRNA(Glu) + L-glutamate + ATP = L-glutamyl-tRNA(Glu) + AMP + diphosphate. In terms of biological role, catalyzes the attachment of glutamate to tRNA(Glu) in a two-step reaction: glutamate is first activated by ATP to form Glu-AMP and then transferred to the acceptor end of tRNA(Glu). The sequence is that of Glutamate--tRNA ligase 1 from Aliarcobacter butzleri (strain RM4018) (Arcobacter butzleri).